We begin with the raw amino-acid sequence, 531 residues long: Protein MGF 505-1R (531 aa).

Belongs to the asfivirus MGF 505 family.

In terms of biological role, plays a role in virus cell tropism, and may be required for efficient virus replication in macrophages. The polypeptide is Protein MGF 505-1R (Ornithodoros (relapsing fever ticks)).